The chain runs to 893 residues: Serine/threonine-protein kinase/endoribonuclease IRE1 (893 aa).

The signal sequence occupies residues Met1–Phe19. Over Arg20–Trp379 the chain is Lumenal. N-linked (GlcNAc...) asparagine glycans are attached at residues Asn105, Asn158, Asn259, and Asn351. The chain crosses the membrane as a helical span at residues Leu380–Ala397. The Cytoplasmic portion of the chain corresponds to Asp398 to Ala893. Positions Ala451–Leu478 are disordered. Positions Cys491–Phe759 constitute a Protein kinase domain. ATP is bound by residues Ile497–Val505 and Lys519. Asp625 (proton acceptor) is an active-site residue. One can recognise a KEN domain in the interval Pro762–Gly890.

It belongs to the protein kinase superfamily. Ser/Thr protein kinase family. Homodimer; disulfide-linked. Dimer formation is driven by hydrophobic interactions within the N-terminal luminal domains and stabilized by disulfide bridges. Autophosphorylated. In terms of tissue distribution, expressed in roots, nodes, internodes, leaf sheaths, leaf blades, young ears and mature ears.

It is found in the endoplasmic reticulum membrane. It catalyses the reaction L-seryl-[protein] + ATP = O-phospho-L-seryl-[protein] + ADP + H(+). The catalysed reaction is L-threonyl-[protein] + ATP = O-phospho-L-threonyl-[protein] + ADP + H(+). Involved in endoplasmic reticulum (ER) stress response. Senses unfolded proteins in the lumen of the ER via its N-terminal domain which leads to enzyme auto-activation. The active endoribonuclease domain splices bZIP50 mRNA to generate a new C-terminus, converting it into a potent unfolded-protein response (UPR) transcriptional activator, which then induces transcription of UPR target genes, such as luminal-binding protein (BiP) chaperones. The sequence is that of Serine/threonine-protein kinase/endoribonuclease IRE1 from Oryza sativa subsp. japonica (Rice).